Consider the following 234-residue polypeptide: N-(5'-phosphoribosyl)anthranilate isomerase 1 (234 aa).

It belongs to the TrpF family.

It catalyses the reaction N-(5-phospho-beta-D-ribosyl)anthranilate = 1-(2-carboxyphenylamino)-1-deoxy-D-ribulose 5-phosphate. It participates in amino-acid biosynthesis; L-tryptophan biosynthesis; L-tryptophan from chorismate: step 3/5. The sequence is that of N-(5'-phosphoribosyl)anthranilate isomerase 1 (trpF1) from Methanosarcina mazei (strain ATCC BAA-159 / DSM 3647 / Goe1 / Go1 / JCM 11833 / OCM 88) (Methanosarcina frisia).